Consider the following 250-residue polypeptide: MKIGVFDSGVGGLSVLKSLYEARLFDEIIYYGDTARVPYGVKDKDTIIKFCLEALDFFEQFQIDMLIIACNTASAYALDALRAKAHFPVYGVIDAGVEATIKALHDKNKEILVIATKATIKSEEYQKRLLSQGYTNINALATGLFVPMVEEGIFEGDFLQSAMEYYFKNITTPDALILACTHFPLLGRSLSKYFGDKTKLIHSGDAIVEFLKERENIDLKNHKAKLHFYASSDVESLKNTAKIWLNLLRK.

Substrate is bound by residues 7–8 and 39–40; these read DS and YG. Cys-70 acts as the Proton donor/acceptor in catalysis. Residue 71 to 72 participates in substrate binding; sequence NT. Catalysis depends on Cys-180, which acts as the Proton donor/acceptor. 181–182 serves as a coordination point for substrate; it reads TH.

Belongs to the aspartate/glutamate racemases family.

It carries out the reaction L-glutamate = D-glutamate. The protein operates within cell wall biogenesis; peptidoglycan biosynthesis. Functionally, provides the (R)-glutamate required for cell wall biosynthesis. This is Glutamate racemase from Campylobacter jejuni subsp. jejuni serotype O:2 (strain ATCC 700819 / NCTC 11168).